Reading from the N-terminus, the 23-residue chain is Basic phospholipase A2 CB2 (23 aa).

The cofactor is Ca(2+). Post-translationally, contains 7 disulfide bonds. As to expression, expressed by the venom gland.

It is found in the secreted. It catalyses the reaction a 1,2-diacyl-sn-glycero-3-phosphocholine + H2O = a 1-acyl-sn-glycero-3-phosphocholine + a fatty acid + H(+). Snake venom phospholipase A2 (PLA2) that shows presynaptic neurotoxicity. PLA2 catalyzes the calcium-dependent hydrolysis of the 2-acyl groups in 3-sn-phosphoglycerides. This Crotalus durissus cumanensis (South American rattlesnake) protein is Basic phospholipase A2 CB2.